The chain runs to 509 residues: MVQEEKAMEAINDALRALRKRHLLEEGAHAPAISALSKPLISQGSEWKEKTEKLETELQQCYKAQSRLSEQLVIEVAESRTSKAILQEKELLINDLQKELTQRREDCTRLQEELEEKTKTVDVLIAENLEIRSQLEEMTSRVQKAETENKMLIDRWMLQKMQDAERLNEANDLYEEMLAKLKANGLETLARQQVDGIVRRNEDGTDHFVESTIPSTCANRIHAHEGGCGSIVFEYNSGTLFTGGQDRAVKMWDTNSGTLIKSLYGSLGNILDMAVTHDNKSVIAATSSNNLFVWDVSSGRVRHTLTGHTDKVCAVDVSKFSSRHVVSAAYDRTIKLWDLHKGYCTNTVLFTSNCNAICLSIDGLTVFSGHMDGNLRLWDIQTGKLLSEVAGHSSAVTSVSLSRNGNRILTSGRDNVHNVFDTRTLEICGTLRASGNRLASNWSRSCISPDDDYVAAGSADGSVHVWSLSKGNIVSILKEQTSPILCCSWSGIGKPLASADKNGYVCTWT.

WD repeat units lie at residues 223–262 (AHEG…LIKS), 265–304 (GSLG…VRHT), 307–347 (GHTD…CTNT), 349–388 (LFTS…LLSE), 391–430 (GHSS…ICGT), 437–478 (RLAS…SILK), and 480–509 (QTSP…CTWT).

It belongs to the WD repeat ATG16 family.

May play a role in autophagy. The protein is Autophagy-related protein 16 of Arabidopsis thaliana (Mouse-ear cress).